We begin with the raw amino-acid sequence, 204 residues long: uncharacterized protein (204 aa).

Cys52 acts as the Acyl-thioester intermediate in catalysis. Active-site residues include His89 and Asp104.

It belongs to the arylamine N-acetyltransferase family.

This is an uncharacterized protein from Acanthamoeba polyphaga mimivirus (APMV).